The chain runs to 218 residues: Small ribosomal subunit protein uS3c (218 aa).

Residues 47 to 118 enclose the KH type-2 domain; it reads IQKTIKISSG…KLNIAITRIA (72 aa).

The protein belongs to the universal ribosomal protein uS3 family. As to quaternary structure, part of the 30S ribosomal subunit.

The protein localises to the plastid. Its subcellular location is the chloroplast. The sequence is that of Small ribosomal subunit protein uS3c (rps3) from Lotus japonicus (Lotus corniculatus var. japonicus).